The sequence spans 604 residues: Glutamine--fructose-6-phosphate aminotransferase [isomerizing] (604 aa).

Cysteine 2 functions as the Nucleophile; for GATase activity in the catalytic mechanism. The Glutamine amidotransferase type-2 domain occupies 2–218; the sequence is CGIVGVVGNT…DKELVIVKKD (217 aa). 2 consecutive SIS domains span residues 284 to 423 and 456 to 594; these read IIKS…ANGK and VEQL…VDKP. The active-site For Fru-6P isomerization activity is the lysine 599.

Homodimer.

It localises to the cytoplasm. The enzyme catalyses D-fructose 6-phosphate + L-glutamine = D-glucosamine 6-phosphate + L-glutamate. Catalyzes the first step in hexosamine metabolism, converting fructose-6P into glucosamine-6P using glutamine as a nitrogen source. This is Glutamine--fructose-6-phosphate aminotransferase [isomerizing] from Streptococcus agalactiae serotype V (strain ATCC BAA-611 / 2603 V/R).